The sequence spans 343 residues: Heat-inducible transcription repressor HrcA (343 aa).

Belongs to the HrcA family.

In terms of biological role, negative regulator of class I heat shock genes (grpE-dnaK-dnaJ and groELS operons). Prevents heat-shock induction of these operons. The sequence is that of Heat-inducible transcription repressor HrcA from Clostridium botulinum (strain Eklund 17B / Type B).